The chain runs to 609 residues: Autophagy-related protein 22-1 (609 aa).

4 helical membrane passes run 95–115, 117–137, 151–171, and 176–196; these read YYAG…GVEI, TASF…ILII, LLLV…LGVV, and MVGA…FVLL. The disordered stretch occupies residues 214 to 238; it reads AREPPPALDGSRAQEGHSDTTNDID. The segment covering 225–238 has biased composition (basic and acidic residues); that stretch reads RAQEGHSDTTNDID. N-linked (GlcNAc...) asparagine glycosylation occurs at N244. Residues 287–307 form a helical membrane-spanning segment; it reads IGIGYIGAIILQIVCILVVIA. N-linked (GlcNAc...) asparagine glycosylation is present at N309. 3 helical membrane-spanning segments follow: residues 317–337, 381–401, and 415–435; these read LVLF…ALWL, ILLF…VSGT, and AALG…AFSW. The N-linked (GlcNAc...) asparagine glycan is linked to N443. 4 helical membrane passes run 450-470, 487-509, 522-542, and 552-572; these read IIAC…GFIP, FPLG…SFFG, ALYA…VGII, and AFVF…LVDV.

This sequence belongs to the ATG22 family.

The protein resides in the vacuole membrane. Functionally, vacuolar effluxer which mediate the efflux of amino acids resulting from autophagic degradation. The release of autophagic amino acids allows the maintenance of protein synthesis and viability during nitrogen starvation. This Neosartorya fischeri (strain ATCC 1020 / DSM 3700 / CBS 544.65 / FGSC A1164 / JCM 1740 / NRRL 181 / WB 181) (Aspergillus fischerianus) protein is Autophagy-related protein 22-1 (atg22-1).